The primary structure comprises 413 residues: Aminopeptidase 2 (413 aa).

A divalent metal cation is bound by residues glutamate 250, glutamate 316, glutamate 340, histidine 345, histidine 378, and aspartate 380.

The protein belongs to the peptidase M29 family. Homodimer. Co(2+) is required as a cofactor. It depends on Zn(2+) as a cofactor. Requires Mg(2+) as cofactor.

Broad specificity metal-dependent exopeptidase, releasing all N-terminal amino acids. The sequence is that of Aminopeptidase 2 from Geobacillus stearothermophilus (Bacillus stearothermophilus).